The following is a 339-amino-acid chain: Serine/threonine-protein kinase SAPK2 (339 aa).

One can recognise a Protein kinase domain in the interval 4-260; that stretch reads YEVIKDIGSG…IPEIKNHPWF (257 aa). ATP-binding positions include 10-18 and K33; that span reads IGSGNFGVA. D123 serves as the catalytic Proton acceptor. Residues 253 to 339 are C-terminal; sequence EIKNHPWFLK…EDSGDFVCAL (87 aa).

The protein belongs to the protein kinase superfamily. Ser/Thr protein kinase family. In terms of assembly, interacts with BZIP46. Interacts with ABI5 and PP2C30. Interacts with PP2C51. In terms of processing, phosphorylated. Expressed in leaf blades, leaf sheaths and roots. Expressed in shoots and roots of young seedlings.

Its subcellular location is the cytoplasm. The protein localises to the nucleus. It carries out the reaction L-seryl-[protein] + ATP = O-phospho-L-seryl-[protein] + ADP + H(+). The enzyme catalyses L-threonyl-[protein] + ATP = O-phospho-L-threonyl-[protein] + ADP + H(+). Activated by phosphorylation in response to hyperosmotic stress within 5 minutes. Functionally, may play a role in signal transduction of hyperosmotic response. Can phosphorylate BZIP46 in vitro. Together with ABI5, PP2C30 and PYL5, is part of an abscisic acid (ABA) signaling unit that modulates seed germination and early seedling growth. This is Serine/threonine-protein kinase SAPK2 (SAPK2) from Oryza sativa subsp. japonica (Rice).